The primary structure comprises 1021 residues: DNA-directed RNA polymerase 2B, chloroplastic/mitochondrial (1021 aa).

The tract at residues lysine 315–lysine 337 is disordered. Catalysis depends on residues aspartate 722, lysine 797, and aspartate 954.

The protein belongs to the phage and mitochondrial RNA polymerase family.

It is found in the plastid. It localises to the chloroplast. The protein localises to the mitochondrion. It catalyses the reaction RNA(n) + a ribonucleoside 5'-triphosphate = RNA(n+1) + diphosphate. In terms of biological role, DNA-dependent RNA polymerase catalyzes the transcription of DNA into RNA using the four ribonucleoside triphosphates as substrates. In Nicotiana tabacum (Common tobacco), this protein is DNA-directed RNA polymerase 2B, chloroplastic/mitochondrial (RPOT2-TOM).